A 345-amino-acid chain; its full sequence is Anthranilate phosphoribosyltransferase (345 aa).

5-phospho-alpha-D-ribose 1-diphosphate is bound by residues Gly88, 91–92 (GD), Thr96, 98–101 (NIST), 116–124 (KHGNRSASG), and Ser128. Gly88 is a binding site for anthranilate. Ser100 is a Mg(2+) binding site. An anthranilate-binding site is contributed by Asn119. Arg174 is an anthranilate binding site. Mg(2+)-binding residues include Asp233 and Glu234.

It belongs to the anthranilate phosphoribosyltransferase family. In terms of assembly, homodimer. It depends on Mg(2+) as a cofactor.

The catalysed reaction is N-(5-phospho-beta-D-ribosyl)anthranilate + diphosphate = 5-phospho-alpha-D-ribose 1-diphosphate + anthranilate. Its pathway is amino-acid biosynthesis; L-tryptophan biosynthesis; L-tryptophan from chorismate: step 2/5. Catalyzes the transfer of the phosphoribosyl group of 5-phosphorylribose-1-pyrophosphate (PRPP) to anthranilate to yield N-(5'-phosphoribosyl)-anthranilate (PRA). This chain is Anthranilate phosphoribosyltransferase, found in Prochlorococcus marinus (strain NATL2A).